Consider the following 339-residue polypeptide: Protein RecA (339 aa).

ATP is bound at residue 73-80; it reads GPESSGKT.

This sequence belongs to the RecA family.

Its subcellular location is the cytoplasm. Functionally, can catalyze the hydrolysis of ATP in the presence of single-stranded DNA, the ATP-dependent uptake of single-stranded DNA by duplex DNA, and the ATP-dependent hybridization of homologous single-stranded DNAs. It interacts with LexA causing its activation and leading to its autocatalytic cleavage. In Mycoplasmopsis pulmonis (strain UAB CTIP) (Mycoplasma pulmonis), this protein is Protein RecA.